Here is a 528-residue protein sequence, read N- to C-terminus: U6 snRNA (guanine-N(2))-methyltransferase THUMPD2 (528 aa).

Residues 154 to 168 (QEVAKDHGESQEDKL) are compositionally biased toward basic and acidic residues. Disordered stretches follow at residues 154-200 (QEVA…ADAQ) and 437-460 (MKTL…RASS). The region spanning 162-266 (ESQEDKLLQG…DAYSVVGIPL (105 aa)) is the THUMP domain.

Belongs to the methyltransferase superfamily. Part of the heterodimeric THUMPD2-TRM112 methyltransferase complex; this complex forms an active tRNA methyltransferase, where TRMT112 acts as an activator of the catalytic subunit THUMPD2.

Its subcellular location is the nucleus. It carries out the reaction guanosine in U6 snRNA + S-adenosyl-L-methionine = N(2)-methylguanosine in U6 snRNA + S-adenosyl-L-homocysteine + H(+). In terms of biological role, catalytic subunit of the THUMPD2-TRM112 methyltransferase complex, that specifically mediates the S-adenosyl-L-methionine-dependent N(2)-methylation of guanosine nucleotides, most probably at position 72 (m2G72), in the U6snRNA of the major spliceosome. This modification in the U6 snRNA affects the constitutive splicing efficiency of introns that have suboptimal splice sites and can impact final mRNA levels. This Mus musculus (Mouse) protein is U6 snRNA (guanine-N(2))-methyltransferase THUMPD2.